We begin with the raw amino-acid sequence, 297 residues long: uncharacterized protein (297 aa).

Disordered regions lie at residues 1 to 20 (MDTL…NADV), 39 to 100 (IEKD…ENLG), and 174 to 297 (VQKA…NEDQ). The 79-residue stretch at 101-179 (NDLFVSGIAS…RVLNVQKAKR (79 aa)) folds into the RRM domain. Ser184 is subject to Phosphoserine. Basic and acidic residues-rich tracts occupy residues 209 to 223 (GGYR…DSNR) and 233 to 253 (PQRE…DSRP). Over residues 254–263 (RRERHFHGRS) the composition is skewed to basic residues. The segment covering 287–297 (SHSSVPPNEDQ) has biased composition (polar residues).

The protein resides in the nucleus. This is an uncharacterized protein from Schizosaccharomyces pombe (strain 972 / ATCC 24843) (Fission yeast).